The sequence spans 444 residues: Argininosuccinate synthase (444 aa).

ATP contacts are provided by residues 17–25 and A43; that span reads AFSGGLDTS. Y99 contributes to the L-citrulline binding site. 2 residues coordinate ATP: G129 and T131. Residues T131, N135, and D136 each coordinate L-aspartate. Residue N135 coordinates L-citrulline. D136 contributes to the ATP binding site. L-citrulline contacts are provided by R139 and S192. D194 is an ATP binding site. T201, E203, and E280 together coordinate L-citrulline.

It belongs to the argininosuccinate synthase family. Type 2 subfamily. In terms of assembly, homotetramer.

It is found in the cytoplasm. It carries out the reaction L-citrulline + L-aspartate + ATP = 2-(N(omega)-L-arginino)succinate + AMP + diphosphate + H(+). It participates in amino-acid biosynthesis; L-arginine biosynthesis; L-arginine from L-ornithine and carbamoyl phosphate: step 2/3. The polypeptide is Argininosuccinate synthase (Delftia acidovorans (strain DSM 14801 / SPH-1)).